Here is a 431-residue protein sequence, read N- to C-terminus: Bone morphogenetic protein 7 (431 aa).

An N-terminal signal peptide occupies residues 1–29 (MHVRSLRAAAPHSFVALWAPLFLLRSALA). A propeptide spanning residues 30–292 (DFSLDNEVHS…ATEVHFRSIR (263 aa)) is cleaved from the precursor. Residues Asn187, Asn302, Asn321, and Asn372 are each glycosylated (N-linked (GlcNAc...) asparagine). Residues 291–311 (IRSTGSKQRSQNRSKTPKNQE) are disordered. 3 cysteine pairs are disulfide-bonded: Cys330–Cys396, Cys359–Cys428, and Cys363–Cys430.

Belongs to the TGF-beta family. As to quaternary structure, homodimer; disulfide-linked. Interacts with SOSTDC1. Interacts with TWSG1. Interacts with FBN1 (via N-terminal domain) and FBN2. Interacts with type I receptor ACVR1. Interacts with type II receptor ACVR2A. Interacts with NOG; this interaction inhibits canonical BMP signaling. Interacts with SCUBE3. Interacts with ERFE; the interaction inhibits BMP-induced transcription of HAMP. Interacts with TGFBR3. Several N-termini starting at positions 293, 300, 315 and 316 have been identified by direct sequencing resulting in secretion of different mature forms. In terms of tissue distribution, expressed in the kidney and bladder. Lower levels seen in the brain.

It localises to the secreted. Its function is as follows. Growth factor of the TGF-beta superfamily that plays important role in various biological processes, including embryogenesis, hematopoiesis, neurogenesis and skeletal morphogenesis. Initiates the canonical BMP signaling cascade by associating with type I receptor ACVR1 and type II receptor ACVR2A. Once all three components are bound together in a complex at the cell surface, ACVR2A phosphorylates and activates ACVR1. In turn, ACVR1 propagates signal by phosphorylating SMAD1/5/8 that travel to the nucleus and act as activators and repressors of transcription of target genes. For specific functions such as growth cone collapse in developing spinal neurons and chemotaxis of monocytes, also uses BMPR2 as type II receptor. Can also signal through non-canonical pathways such as P38 MAP kinase signaling cascade that promotes brown adipocyte differentiation through activation of target genes, including members of the SOX family of transcription factors. Promotes the expression of HAMP, this is repressed by its interaction with ERFE. In Homo sapiens (Human), this protein is Bone morphogenetic protein 7 (BMP7).